A 541-amino-acid chain; its full sequence is Glutamyl-tRNA(Gln) amidotransferase subunit B, mitochondrial (541 aa).

It belongs to the GatB/GatE family. GatB subfamily. In terms of assembly, subunit of the heterotrimeric GatFAB amidotransferase (AdT) complex, composed of A (HER2), B (PET112) and F (YGR102C) subunits.

It is found in the mitochondrion. It catalyses the reaction L-glutamyl-tRNA(Gln) + L-glutamine + ATP + H2O = L-glutaminyl-tRNA(Gln) + L-glutamate + ADP + phosphate + H(+). In terms of biological role, allows the formation of correctly charged Gln-tRNA(Gln) through the transamidation of misacylated Glu-tRNA(Gln) in the mitochondria. The reaction takes place in the presence of glutamine and ATP through an activated gamma-phospho-Glu-tRNA(Gln). This chain is Glutamyl-tRNA(Gln) amidotransferase subunit B, mitochondrial, found in Saccharomyces cerevisiae (strain ATCC 204508 / S288c) (Baker's yeast).